The primary structure comprises 255 residues: Indole-3-glycerol phosphate synthase (255 aa).

It belongs to the TrpC family.

It catalyses the reaction 1-(2-carboxyphenylamino)-1-deoxy-D-ribulose 5-phosphate + H(+) = (1S,2R)-1-C-(indol-3-yl)glycerol 3-phosphate + CO2 + H2O. It functions in the pathway amino-acid biosynthesis; L-tryptophan biosynthesis; L-tryptophan from chorismate: step 4/5. The protein is Indole-3-glycerol phosphate synthase of Streptococcus pneumoniae serotype 2 (strain D39 / NCTC 7466).